The primary structure comprises 209 residues: Large ribosomal subunit protein uL3 (209 aa).

Positions 125–148 (RHGQSRGPMAHGSRYHRRPGSMGP) are disordered.

Belongs to the universal ribosomal protein uL3 family. Part of the 50S ribosomal subunit. Forms a cluster with proteins L14 and L19.

One of the primary rRNA binding proteins, it binds directly near the 3'-end of the 23S rRNA, where it nucleates assembly of the 50S subunit. This Lysinibacillus sphaericus (strain C3-41) protein is Large ribosomal subunit protein uL3.